The sequence spans 270 residues: Formamidopyrimidine-DNA glycosylase (270 aa).

The active-site Schiff-base intermediate with DNA is the proline 2. Glutamate 3 (proton donor) is an active-site residue. Catalysis depends on lysine 58, which acts as the Proton donor; for beta-elimination activity. Residues histidine 91, arginine 110, and arginine 151 each contribute to the DNA site. The FPG-type zinc finger occupies 236-270 (FVYGRGGQPCKVCGTELREVKLGQRASVYCPRCQR). Arginine 260 (proton donor; for delta-elimination activity) is an active-site residue.

Belongs to the FPG family. Monomer. Zn(2+) is required as a cofactor.

It carries out the reaction Hydrolysis of DNA containing ring-opened 7-methylguanine residues, releasing 2,6-diamino-4-hydroxy-5-(N-methyl)formamidopyrimidine.. It catalyses the reaction 2'-deoxyribonucleotide-(2'-deoxyribose 5'-phosphate)-2'-deoxyribonucleotide-DNA = a 3'-end 2'-deoxyribonucleotide-(2,3-dehydro-2,3-deoxyribose 5'-phosphate)-DNA + a 5'-end 5'-phospho-2'-deoxyribonucleoside-DNA + H(+). In terms of biological role, involved in base excision repair of DNA damaged by oxidation or by mutagenic agents. Acts as a DNA glycosylase that recognizes and removes damaged bases. Has a preference for oxidized purines, such as 7,8-dihydro-8-oxoguanine (8-oxoG). Has AP (apurinic/apyrimidinic) lyase activity and introduces nicks in the DNA strand. Cleaves the DNA backbone by beta-delta elimination to generate a single-strand break at the site of the removed base with both 3'- and 5'-phosphates. This chain is Formamidopyrimidine-DNA glycosylase, found in Pseudomonas putida (strain ATCC 700007 / DSM 6899 / JCM 31910 / BCRC 17059 / LMG 24140 / F1).